The chain runs to 1119 residues: GATOR2 complex protein MIOS (1119 aa).

One copy of the WD 1 repeat lies at Q3–N43. Residues K41 to Q60 form a disordered region. The segment covering N45–Q60 has biased composition (low complexity). 5 WD repeats span residues K127–S169, K183–L227, T281–S321, A324–I364, and S368–K409. The segment at L413–T455 is disordered. The span at S427–S444 shows a compositional bias: low complexity. The stretch at H459–W499 is one WD 7 repeat. The segment at P601 to N669 is disordered. The C4-type zinc-finger motif lies at A973 to S1016. Zn(2+)-binding residues include C975, C978, C1010, C1013, C1023, C1085, C1088, H1090, H1093, H1096, C1107, C1112, and C1116.

Belongs to the WD repeat mio family. As to quaternary structure, probably part of the GATOR complex.

It localises to the lysosome membrane. Functionally, as a component of the GATOR complex may function in the amino acid-sensing branch of the TORC1 signaling pathway. The polypeptide is GATOR2 complex protein MIOS (Dictyostelium discoideum (Social amoeba)).